The primary structure comprises 1028 residues: MFTASPMSLSKILARRDWENPGVTQWHRLPAHAPFNSWRDEASARADDNASRKRSLNGDWQFSYYAAPEQVPDSWVTEDCADAVTTPVPSNWQMQGFDTPIYTNDTYPIPVNPPFVPAENPTGCYSLTFEVDEQWLESGQTRIVFDGVNSAFYLWCNGKWMGYSQDSRLPAEFDLSAVLRPGTNRLAVLVLRWCDGSYLEDQDMWRMSGIFRDVSLLHKPHTHIADYHAVTELNADYDRAKLQVEVALAGEQFADCEVAVTLWRDGLSVATVSAKPGSAIIDERGNWAERLNVTLPVKDPALWSAETPELYRLTFALRDGQGEILDVEACDVGFRCVEISNGLLKVNGKPLLIRGVNRHEHHPENGQVMDEATMCRDIELMKQHNFNAVRCSHYPNHPLWYTLCDRYGLYVVDEANIETHGMVPMSRLADDPRWLPAMSERVTRMVLRDRNHPSIIIWSLGNESGHGANHDALYRWVKTTDPTRPVQYEGGGANTAATDIVCPMYARVDQDQPFEAVPKWSLKKWIGMPDETRPLILCEYAHAMGNSFGGFAKYWQAFRNHPRLQGGFVWDWVDQALTKKDDNGNAFWAYGGDFGDTPNDRQFCLNGLVFPDRTPHPALFEAQRAQQFFTFTLVSTSPLVIDVHSDYLFRQCDNEQLRWNIARDGEVLASGEVALTIAPQQTQRIEIDAPEFAAAAGEIWLNVDIVQTAATAWSPADHRCAWDQWQLPAPLYIAPPVEGTAKPDLKVKEDVLEVSHQSQRWHFDRASGNLTQWWNNGTATLLAPLSDNFTRAPLDNDIGVSEATRIDPNAWVERWKAAGMYNLTPRLLLCEGEQLAQAVTITTLHAWESNGKALFLSRKVWKIDRAGVLHGDVQVQVANDIPQPARIGLSCQLAQTPQTASWLGLGPDENYPDRKLAARQGRWTLPLDALHTAYIFPTDNGLRCDTRELTFDTHQMQGDFHFSLSRYSQQQLRDTSHHHLLEAEPGCWLNIDAFHMGVGGDDSWSPSVSPEFILQRREMRYAFSWRQD.

Residues asparagine 104 and aspartate 203 each contribute to the substrate site. Aspartate 203 provides a ligand contact to Na(+). Residues glutamate 418, histidine 420, and glutamate 463 each contribute to the Mg(2+) site. Substrate contacts are provided by residues glutamate 463 and 539 to 542 (EYAH). Glutamate 463 functions as the Proton donor in the catalytic mechanism. Glutamate 539 serves as the catalytic Nucleophile. Asparagine 599 contacts Mg(2+). Na(+)-binding residues include phenylalanine 603 and asparagine 606. Substrate is bound by residues asparagine 606 and tryptophan 1004.

It belongs to the glycosyl hydrolase 2 family. In terms of assembly, homodimer. It depends on Mg(2+) as a cofactor. Requires Mn(2+) as cofactor. The cofactor is Fe cation. Na(+) serves as cofactor. K(+) is required as a cofactor.

It catalyses the reaction Hydrolysis of terminal non-reducing beta-D-galactose residues in beta-D-galactosides.. Its activity is regulated as follows. Completely inhibited by Hg(2+), Cu(2+) Ag(2+), and partially inhibited by Zn(2+), imidazole and EDTA. Activated by Ca(2+), Co(2+), Ni(2+). In terms of biological role, this beta-galactosidase is also able to catalyze glycosyl transfer to a series of acceptors, including hexose, pentose, beta- or alpha-disaccharides, hexahydroxy alcohol, cyclitol, and aromatic glycosides, resulting in the production of galacto-oligosaccharides (GOS). This Enterobacter agglomerans (Erwinia herbicola) protein is Beta-galactosidase (lacZ).